Here is a 92-residue protein sequence, read N- to C-terminus: Small ribosomal subunit protein uS19c (92 aa).

It belongs to the universal ribosomal protein uS19 family.

The protein resides in the plastid. The protein localises to the chloroplast. Functionally, protein S19 forms a complex with S13 that binds strongly to the 16S ribosomal RNA. In Nicotiana sylvestris (Wood tobacco), this protein is Small ribosomal subunit protein uS19c.